Consider the following 310-residue polypeptide: Isoflavone reductase homolog A622 (310 aa).

NADP(+)-binding positions include 13–19, Arg38, and Lys47; that span reads GGTGYIG. Lys135 acts as the Proton acceptor in catalysis. An NADP(+)-binding site is contributed by Arg139.

This sequence belongs to the NmrA-type oxidoreductase family. Isoflavone reductase subfamily. In terms of assembly, monomer.

It is found in the cytoplasm. It functions in the pathway alkaloid biosynthesis; nicotine biosynthesis. NADPH-binding protein. Involved in the biosynthesis of pyridine alkaloid natural products, leading mainly to the production of anabasine, anatabine, nicotine and nornicotine, effective deterrents against herbivores with antiparasitic and pesticide properties (neurotoxins); nornicotine serves as the precursor in the synthesis of the carcinogen compound N'-nitrosonornicotine (NNN). Reductase involved in a late step of tobacco alkaloid biosynthesis. Triggers either the formation of a nicotinic acid-derived precursor or the final condensation reaction of tobacco alkaloids. The sequence is that of Isoflavone reductase homolog A622 from Nicotiana glauca (Glaucous tobacco).